A 1010-amino-acid chain; its full sequence is Importin-8 (1010 aa).

The region spanning 22 to 102 (AETELNQSYK…RDNIVEGIIR (81 aa)) is the Importin N-terminal domain. The span at 886–895 (NHSKAEKVDI) shows a compositional bias: basic and acidic residues. Positions 886-932 (NHSKAEKVDIEENEEISSEEEEETSVSAQAMQSQIGRSEEEDDDDWD) are disordered. Acidic residues predominate over residues 896–909 (EENEEISSEEEEET). Residues S902 and S903 each carry the phosphoserine modification. Residues 910–921 (SVSAQAMQSQIG) are compositionally biased toward polar residues.

This sequence belongs to the importin beta family. Forms a heterodimer with KPNB1. Interacts with SRP19. Interacts with RPL23A. Binds directly to nuclear pore complexes. Interacts with LRPPRC; the interaction occurs when LRPPRC is in its RNA-free form and promotes import of LRPPRC to the nucleus to allow for EIF4E-mediated export of mRNAS from the nucleus to the cytoplasm.

The protein localises to the cytoplasm. The protein resides in the nucleus. Involved in nuclear protein import, either by acting as autonomous nuclear transport receptor or as an adapter-like protein in association with the importin-beta subunit KPNB1. Acting autonomously, may serve as receptor for nuclear localization signals (NLS) and promote translocation of import substrates through the nuclear pore complex (NPC) by an energy requiring, Ran-dependent mechanism. At the nucleoplasmic side of the NPC, Ran binds to importin, the importin/substrate complex dissociates and importin is re-exported from the nucleus to the cytoplasm where GTP hydrolysis releases Ran. The directionality of nuclear import is thought to be conferred by an asymmetric distribution of the GTP- and GDP-bound forms of Ran between the cytoplasm and nucleus. In vitro mediates the nuclear import of the signal recognition particle protein SRP19. May also be involved in cytoplasm-to-nucleus shuttling of a broad spectrum of other cargos, including Argonaute-microRNAs complexes, the JUN protein, RELA/NF-kappa-B p65 subunit, the translation initiation factor EIF4E and a set of receptor-activated mothers against decapentaplegic homolog (SMAD) transcription factors that play a critical role downstream of the large family of transforming growth factor beta and bone morphogenetic protein (BMP) cytokines. In Mus musculus (Mouse), this protein is Importin-8.